The sequence spans 407 residues: Methyltransferase/ribosomally synthesized type I borosin cyclic peptide precursor ceuMA2 (407 aa).

The methyltransferase domain stretch occupies residues 1–246 (MATTKTGSLT…TTSTLYIPPR (246 aa)). Active-site residues include Arg70, Tyr74, and Tyr96. 8 residues coordinate S-adenosyl-L-methionine: Tyr96, His98, Val101, Ala128, Gln170, Gly208, Ser239, and Thr240. The segment at 247–370 (EIAPVDQRIM…GPVYKVMRAT (124 aa)) is clasp domain. Residues 371–393 (PAAIAAGQEHSLDEIAGSADSES) are precursor leader. 2 positions are modified to N-methylthreonine: Thr399 and Thr400. Ile401 carries the N-methylisoleucine modification. An N-methylvaline mark is found at Val402 and Val403. Ile404 is subject to N-methylisoleucine. Val405 is subject to N-methylvaline. His406 carries the post-translational modification N-methylhistidine.

In the N-terminal section; belongs to the precorrin methyltransferase family. As to quaternary structure, homodimer. Post-translationally, ceuMA2 automethylates at Thr-399, Thr-400, Ile-401, Val-402, Val-403, Ile-404, Val-405 and His-406 before being processed by a prolyloligopeptidase which likely forms a peptidyl ester upon removal of the follower propeptide, which then undergoes macrocyclization with the N-terminus of the modified core peptide. Peptide backbone alpha-N-methylations change the physicochemical properties of amide bonds to provide structural constraints and other favorable characteristics including biological membrane permeability to peptides.

It functions in the pathway secondary metabolite biosynthesis. Its function is as follows. Fusion protein of the methyltransferase ceuM2 and a type I borosin core peptide; part of the gene cluster that mediates the biosynthesis of a type I borosin, a highly methylated cyclic peptide with potent biological activities. Type I borosins derive from the C-terminus of the fusion protein, and it is the same protein that methylates its own C-terminus using S-adenosyl methionine (SAM). The C-terminus is subsequently cleaved off and macrocyclized by a prolyloligopeptidase to give the final product. This Cerrena unicolor (Canker rot fungus) protein is Methyltransferase/ribosomally synthesized type I borosin cyclic peptide precursor ceuMA2.